We begin with the raw amino-acid sequence, 159 residues long: Ribosomal RNA large subunit methyltransferase H (159 aa).

Residues leucine 76 and glycine 108 each coordinate S-adenosyl-L-methionine.

The protein belongs to the RNA methyltransferase RlmH family. As to quaternary structure, homodimer.

It is found in the cytoplasm. It catalyses the reaction pseudouridine(1915) in 23S rRNA + S-adenosyl-L-methionine = N(3)-methylpseudouridine(1915) in 23S rRNA + S-adenosyl-L-homocysteine + H(+). Specifically methylates the pseudouridine at position 1915 (m3Psi1915) in 23S rRNA. This Limosilactobacillus reuteri (strain DSM 20016) (Lactobacillus reuteri) protein is Ribosomal RNA large subunit methyltransferase H.